A 191-amino-acid polypeptide reads, in one-letter code: Uridylate kinase (191 aa).

Residue 12 to 17 coordinates ATP; the sequence is GAGKGT. The tract at residues 33–63 is NMP; it reads SAGDCLREEQNRPGSKYGNLIKEYIKDGKIV. A ribonucleoside 5'-phosphate contacts are provided by residues Arg-39, 61–63, 91–94, and Gln-98; these read KIV and GFPR. The segment at 128–138 is LID; the sequence is HRGKTSGRSDD. Arg-129 contributes to the ATP binding site. A ribonucleoside 5'-phosphate contacts are provided by Arg-135 and Arg-146. Residue Gln-174 participates in ATP binding.

Belongs to the adenylate kinase family. UMP-CMP kinase subfamily. As to quaternary structure, monomer. It depends on Mg(2+) as a cofactor.

It localises to the cytoplasm. The protein localises to the nucleus. It catalyses the reaction UMP + ATP = UDP + ADP. Functionally, catalyzes the phosphorylation of pyrimidine nucleoside monophosphates at the expense of ATP. Plays an important role in de novo pyrimidine nucleotide biosynthesis. Has preference for UMP and dUMP as phosphate acceptors, but can also use CMP, dCMP and AMP. This is Uridylate kinase from Schizosaccharomyces pombe (strain 972 / ATCC 24843) (Fission yeast).